Reading from the N-terminus, the 69-residue chain is uncharacterized protein (69 aa).

The signal sequence occupies residues 1–19 (MKRIWVSLMIAITACSAHA).

This is an uncharacterized protein from Pasteurella multocida (strain Pm70).